The following is a 440-amino-acid chain: Suppressor of cytokine signaling 4 (440 aa).

The segment covering 1-10 (MAENNENISK) has biased composition (polar residues). Residues 1-29 (MAENNENISKNVDVRPKTSRSRSADRKDG) form a disordered region. The span at 12–29 (VDVRPKTSRSRSADRKDG) shows a compositional bias: basic and acidic residues. The 96-residue stretch at 286-381 (CYWGVMDKYA…FFEPLLSTPL (96 aa)) folds into the SH2 domain. The SOCS box domain maps to 376-425 (LLSTPLIRTFPFSLQHICRTVICNCTTYDGIDALPIPSSMKLYLKEYHYK).

It participates in protein modification; protein ubiquitination. In terms of biological role, SOCS family proteins form part of a classical negative feedback system that regulates cytokine signal transduction. Substrate-recognition component of a SCF-like ECS (Elongin BC-CUL2/5-SOCS-box protein) E3 ubiquitin-protein ligase complex which mediates the ubiquitination and subsequent proteasomal degradation of target proteins. Inhibits EGF signaling by mediating the degradation of the Tyr-phosphorylated EGF receptor/EGFR. This is Suppressor of cytokine signaling 4 (SOCS4) from Homo sapiens (Human).